The following is a 245-amino-acid chain: Ubiquinone/menaquinone biosynthesis C-methyltransferase UbiE (245 aa).

S-adenosyl-L-methionine-binding positions include T71, D92, and 118–119; that span reads DA.

The protein belongs to the class I-like SAM-binding methyltransferase superfamily. MenG/UbiE family.

It carries out the reaction a 2-demethylmenaquinol + S-adenosyl-L-methionine = a menaquinol + S-adenosyl-L-homocysteine + H(+). The enzyme catalyses a 2-methoxy-6-(all-trans-polyprenyl)benzene-1,4-diol + S-adenosyl-L-methionine = a 5-methoxy-2-methyl-3-(all-trans-polyprenyl)benzene-1,4-diol + S-adenosyl-L-homocysteine + H(+). Its pathway is quinol/quinone metabolism; menaquinone biosynthesis; menaquinol from 1,4-dihydroxy-2-naphthoate: step 2/2. It participates in cofactor biosynthesis; ubiquinone biosynthesis. Its function is as follows. Methyltransferase required for the conversion of demethylmenaquinol (DMKH2) to menaquinol (MKH2) and the conversion of 2-polyprenyl-6-methoxy-1,4-benzoquinol (DDMQH2) to 2-polyprenyl-3-methyl-6-methoxy-1,4-benzoquinol (DMQH2). The chain is Ubiquinone/menaquinone biosynthesis C-methyltransferase UbiE from Neisseria meningitidis serogroup A / serotype 4A (strain DSM 15465 / Z2491).